We begin with the raw amino-acid sequence, 92 residues long: YcgL domain-containing protein Sama_1929 (92 aa).

One can recognise a YcgL domain in the interval 1-85 (MICAVYKSSR…PKDNLLTQHR (85 aa)).

This chain is YcgL domain-containing protein Sama_1929, found in Shewanella amazonensis (strain ATCC BAA-1098 / SB2B).